The following is a 658-amino-acid chain: Palmitoyltransferase ZDHHC5-B (658 aa).

The Cytoplasmic portion of the chain corresponds to 1-24 (MPVGLSVGGALGDPSPSRPFRPSR). Residues 25–45 (YVPVSAATAFLVGATTLFLCF) form a helical membrane-spanning segment. Residues 46–56 (TCPWLSEKFSS) are Extracellular-facing. Residues 57 to 77 (FIPLYNVVVFLFTLANFCMAT) traverse the membrane as a helical segment. The Cytoplasmic segment spans residues 78-159 (FMDPGVFPRA…NCIGRRNYRY (82 aa)). The region spanning 115–165 (KWCSTCRFYRPPRCSHCSVCDNCVEEFDHHCPWVNNCIGRRNYRYFFLFLL) is the DHHC domain. Catalysis depends on Cys145, which acts as the S-palmitoyl cysteine intermediate. The helical transmembrane segment at 160-180 (FFLFLLSLTVHIMDVFGFSLL) threads the bilayer. Residues 181–202 (YILHHTKQLDLVQSGVTMAVMC) lie on the Extracellular side of the membrane. A helical membrane pass occupies residues 203–223 (VAGLFFVPVAGLTGFHVVLVA). The Cytoplasmic segment spans residues 224–658 (RGRTTNEQVT…VGGTTYEISV (435 aa)). Disordered regions lie at residues 306-419 (EIME…RSGS), 490-522 (ESLL…LSTA), and 540-658 (QREG…EISV). Residues 360-398 (PGKNHTASTHSSKMSRGNSMTESPSVPVTTGQPSYRSDP) show a composition bias toward polar residues. Positions 407 to 419 (GCRGGAEGGRSGS) are enriched in gly residues. Over residues 565–575 (SSPPSRAPPLS) the composition is skewed to pro residues. The span at 619 to 633 (SMPNSTIKQNVANHN) shows a compositional bias: polar residues. Positions 634–644 (THSHKPARGVK) are enriched in basic residues.

It belongs to the DHHC palmitoyltransferase family. ERF2/ZDHHC9 subfamily.

It localises to the cell membrane. It catalyses the reaction L-cysteinyl-[protein] + hexadecanoyl-CoA = S-hexadecanoyl-L-cysteinyl-[protein] + CoA. In terms of biological role, palmitoyltransferase that catalyzes the addition of palmitate onto various protein substrates and is involved in a variety of cellular processes. In Danio rerio (Zebrafish), this protein is Palmitoyltransferase ZDHHC5-B.